Here is a 298-residue protein sequence, read N- to C-terminus: ATP phosphoribosyltransferase (298 aa).

Belongs to the ATP phosphoribosyltransferase family. Long subfamily. Requires Mg(2+) as cofactor.

Its subcellular location is the cytoplasm. It carries out the reaction 1-(5-phospho-beta-D-ribosyl)-ATP + diphosphate = 5-phospho-alpha-D-ribose 1-diphosphate + ATP. It functions in the pathway amino-acid biosynthesis; L-histidine biosynthesis; L-histidine from 5-phospho-alpha-D-ribose 1-diphosphate: step 1/9. Feedback inhibited by histidine. Catalyzes the condensation of ATP and 5-phosphoribose 1-diphosphate to form N'-(5'-phosphoribosyl)-ATP (PR-ATP). Has a crucial role in the pathway because the rate of histidine biosynthesis seems to be controlled primarily by regulation of HisG enzymatic activity. This chain is ATP phosphoribosyltransferase, found in Psychromonas ingrahamii (strain DSM 17664 / CCUG 51855 / 37).